A 412-amino-acid polypeptide reads, in one-letter code: Glucose-1-phosphate adenylyltransferase (412 aa).

Residues Gly-169, 184-185 (EK), and Ser-201 contribute to the alpha-D-glucose 1-phosphate site.

Belongs to the bacterial/plant glucose-1-phosphate adenylyltransferase family. In terms of assembly, homotetramer.

It catalyses the reaction alpha-D-glucose 1-phosphate + ATP + H(+) = ADP-alpha-D-glucose + diphosphate. Its pathway is glycan biosynthesis; glycogen biosynthesis. Functionally, involved in the biosynthesis of ADP-glucose, a building block required for the elongation reactions to produce glycogen. Catalyzes the reaction between ATP and alpha-D-glucose 1-phosphate (G1P) to produce pyrophosphate and ADP-Glc. This Geobacter metallireducens (strain ATCC 53774 / DSM 7210 / GS-15) protein is Glucose-1-phosphate adenylyltransferase.